Here is a 125-residue protein sequence, read N- to C-terminus: Cu-Zn superoxide dismutase-like protein OPG175 (125 aa).

C52 and C102 are oxidised to a cystine.

It belongs to the Cu-Zn superoxide dismutase family.

The protein resides in the virion. It is found in the host cytoplasm. Functionally, superoxide dismutase-like protein with no enzymatic activity. The protein is Cu-Zn superoxide dismutase-like protein OPG175 (OPG175) of Monkeypox virus.